The following is a 474-amino-acid chain: Glycogen synthase (474 aa).

K15 provides a ligand contact to ADP-alpha-D-glucose.

It belongs to the glycosyltransferase 1 family. Bacterial/plant glycogen synthase subfamily.

The enzyme catalyses [(1-&gt;4)-alpha-D-glucosyl](n) + ADP-alpha-D-glucose = [(1-&gt;4)-alpha-D-glucosyl](n+1) + ADP + H(+). It functions in the pathway glycan biosynthesis; glycogen biosynthesis. Functionally, synthesizes alpha-1,4-glucan chains using ADP-glucose. The polypeptide is Glycogen synthase (Chlamydia trachomatis serovar L2b (strain UCH-1/proctitis)).